Consider the following 318-residue polypeptide: Nitrate reductase [NADH] (318 aa).

A Cytochrome b5 heme-binding domain is found at 216–291 (AKSFTMAEVE…LLEYYIGELA (76 aa)). Heme-binding residues include H251 and H274.

The protein belongs to the nitrate reductase family. As to quaternary structure, homodimer. FAD is required as a cofactor. Requires heme as cofactor. Mo-molybdopterin serves as cofactor.

The enzyme catalyses nitrite + NAD(+) + H2O = nitrate + NADH + H(+). Nitrate reductase is a key enzyme involved in the first step of nitrate assimilation in plants, fungi and bacteria. This Chlorella vulgaris (Green alga) protein is Nitrate reductase [NADH].